The following is a 206-amino-acid chain: GTP-binding protein Rho3 (206 aa).

24 to 31 (GDGACGKT) is a binding site for GTP. Residues 46 to 54 (YEPTVFENY) carry the Effector region motif. GTP-binding positions include 71-75 (DTAGQ) and 129-132 (SKCD). Cys203 is modified (cysteine methyl ester). A lipid anchor (S-geranylgeranyl cysteine) is attached at Cys203. Residues 204–206 (CVM) constitute a propeptide, removed in mature form.

Belongs to the small GTPase superfamily. Rho family.

It localises to the cell membrane. The protein is GTP-binding protein Rho3 (RHO3) of Schizophyllum commune (Split gill fungus).